The primary structure comprises 815 residues: Cell division control protein 53 (815 aa).

A required for interaction with SKP1/CBF3D and F-box protein region spans residues 9-280 (DDLEATWNFI…WDDHTKKPLS (272 aa)). The segment at 448-748 (KKATKPEVAS…IEKELNTERQ (301 aa)) is required for interaction with CDC34/UBC3. A Cullin neddylation domain is found at 746 to 807 (ERQIFLEACI…QKGYLQRGDD (62 aa)). Lysine 760 is covalently cross-linked (Glycyl lysine isopeptide (Lys-Gly) (interchain with G-Cter in NEDD8)).

It belongs to the cullin family. As to quaternary structure, component of multiple SCF (SKP1-CUL1-F-box) E3 ubiquitin-protein ligase complexes formed of CUL1, SKP1/HRT1, RBX1 and a variable F-box domain-containing protein as substrate-specific adapter. Component of the SCF(CDC4) complex containing CDC4. Component of the SCF(MET30) complex containing MET30. Component of the SCF(GRR1) complex containing GRR1. Component of the probable SCF(DIA2) complex containing DIA2. Component of the probable SCF(YDR131C) complex containing YDR131C. Component of the probable SCF(YDR306C) complex containing YDR306C. Component of the probable SCF(YLR224W) complex containing YLR224W. Component of the probable SCF(YJL149W) complex containing YJL149W. Component of the probable SCF(YNL311C) complex containing YNL311C. Component of the probable SCF(MDM30) complex containing MDM30. Component of the probable SCF(UFO1) complex containing UFO1. Component of the probable SCF(HRT3) complex containing HRT3. Component of the probable SCF(YBR280C) complex containing YBR280C. Component of the probable SCF(YBR352W) complex containing YBR352W. Interacts with DCN1, YBR280C, YLR224W and YLR352W. The unneddylated form interacts with LAG2/CAND1 and the interaction mediates the exchange of the F-box substrate-specific subunit. In terms of processing, neddylated; enhancing the ubiquitin-ligase activity.

The protein resides in the cytoplasm. Its subcellular location is the nucleus. In terms of biological role, core component of multiple cullin-RING-based SCF (SKP1-CUL1-F-box) E3 ubiquitin-protein ligase complexes which mediate the ubiquitination and subsequent proteasomal degradation of target proteins. As a scaffold protein may contribute to catalysis through positioning of the substrate and the ubiquitin-conjugating enzyme. The SCF complex associates with CDC34 as the E2 ubiquitin-conjugating enzyme. The functional specificity of the SCF complex depends on the type of F-box protein. SCF(CDC4) controls the G1-to-S phase transition; it directs ubiquitination of the phosphorylated CDK inhibitor SIC1 and of CDC6. SCF(CDC4) directs ubiquitination of GCN4. SCF(GRR1) directs ubiquitination of phosphorylated CLN1, CLN2 and GIC2. SCF(MET30) directs ubiquitination of MET4. SCF(DIA2) is specifically involved in the pheromone induced degradation of phosphorylated TEC1. SCF(MDM30) seems to direct ubiquitination of FZ01. Involved in the regulation of methionine biosynthesis genes. The chain is Cell division control protein 53 (CDC53) from Saccharomyces cerevisiae (strain ATCC 204508 / S288c) (Baker's yeast).